A 116-amino-acid polypeptide reads, in one-letter code: Large ribosomal subunit protein bL19c (116 aa).

Belongs to the bacterial ribosomal protein bL19 family.

It is found in the plastid. The protein localises to the chloroplast. In Cyanidium caldarium (Red alga), this protein is Large ribosomal subunit protein bL19c.